The sequence spans 100 residues: Nucleoid-associated protein RoseRS_1534 (100 aa).

The protein belongs to the YbaB/EbfC family. Homodimer.

It is found in the cytoplasm. The protein localises to the nucleoid. In terms of biological role, binds to DNA and alters its conformation. May be involved in regulation of gene expression, nucleoid organization and DNA protection. The polypeptide is Nucleoid-associated protein RoseRS_1534 (Roseiflexus sp. (strain RS-1)).